The chain runs to 281 residues: Beta-etherase (281 aa).

A GST N-terminal domain is found at 11-87; that stretch reads DLQLESGCTI…YLDEKYPDRP (77 aa). A disordered region spans residues 244 to 281; it reads GDPEPFVRQTGPAGAGGQALNKGPQTTKMPPRVAEKAD.

Belongs to the GST superfamily.

The protein localises to the cell inner membrane. Its function is as follows. Able to degrade various dimeric lignin compounds. Catalyzes the unique and reductive cleavage of arylglycerol-beta-aryl ether. The sequence is that of Beta-etherase (ligE) from Sphingobium sp. (strain NBRC 103272 / SYK-6).